A 408-amino-acid chain; its full sequence is F-box A protein 155 (408 aa).

Positions 1–22 are disordered; sequence MSDRGSDQSSSSSDSAQHIPPK.

Belongs to the FTH family.

The chain is F-box A protein 155 (fbxa-155) from Caenorhabditis elegans.